Reading from the N-terminus, the 467-residue chain is Hydroxymethylglutaryl-CoA synthase erg13A (467 aa).

A35 contributes to the (3S)-3-hydroxy-3-methylglutaryl-CoA binding site. E86 functions as the Proton donor/acceptor in the catalytic mechanism. (3S)-3-hydroxy-3-methylglutaryl-CoA-binding residues include C118, T160, S209, H259, K268, N334, and S368. C118 acts as the Acyl-thioester intermediate in catalysis. The active-site Proton donor/acceptor is the H259.

The protein belongs to the thiolase-like superfamily. HMG-CoA synthase family.

The enzyme catalyses acetoacetyl-CoA + acetyl-CoA + H2O = (3S)-3-hydroxy-3-methylglutaryl-CoA + CoA + H(+). Its pathway is metabolic intermediate biosynthesis; (R)-mevalonate biosynthesis; (R)-mevalonate from acetyl-CoA: step 2/3. In terms of biological role, hydroxymethylglutaryl-CoA synthase; part of the first module of ergosterol biosynthesis pathway that includes the early steps of the pathway, conserved across all eukaryotes, and which results in the formation of mevalonate from acetyl-coenzyme A (acetyl-CoA). Erg13A and erg13B condense acetyl-CoA with acetoacetyl-CoA to form hydroxymethylglutaryl-CoA (HMG-CoA). The first module starts with the action of the cytosolic acetyl-CoA acetyltransferase erg10B that catalyzes the formation of acetoacetyl-CoA. The hydroxymethylglutaryl-CoA synthases erg13A and erg13B then condense acetyl-CoA with acetoacetyl-CoA to form HMG-CoA. The rate-limiting step of the early module is the reduction to mevalonate by the 3-hydroxy-3-methylglutaryl-coenzyme A (HMG-CoA) reductases hmg1 and hmg2. Mevalonate is also a precursor for the extracellular siderophore triacetylfusarinine C (TAFC). This Aspergillus fumigatus (strain ATCC MYA-4609 / CBS 101355 / FGSC A1100 / Af293) (Neosartorya fumigata) protein is Hydroxymethylglutaryl-CoA synthase erg13A.